The primary structure comprises 274 residues: Large ribosomal subunit protein uL2 (274 aa).

Disordered regions lie at residues 30–54 (EKSL…IRHK) and 223–274 (VAMN…QLKG). Residues 36 to 48 (GKKSSGGRNNNGR) are compositionally biased toward low complexity. Residues 263–274 (KFSDKYIKQLKG) are compositionally biased toward basic and acidic residues.

Belongs to the universal ribosomal protein uL2 family. Part of the 50S ribosomal subunit. Forms a bridge to the 30S subunit in the 70S ribosome.

One of the primary rRNA binding proteins. Required for association of the 30S and 50S subunits to form the 70S ribosome, for tRNA binding and peptide bond formation. It has been suggested to have peptidyltransferase activity; this is somewhat controversial. Makes several contacts with the 16S rRNA in the 70S ribosome. The protein is Large ribosomal subunit protein uL2 of Wolbachia sp. subsp. Brugia malayi (strain TRS).